The sequence spans 215 residues: Pyridoxine/pyridoxamine 5'-phosphate oxidase (215 aa).

Substrate contacts are provided by residues 8–11 (RQEY) and Lys66. FMN is bound by residues 61–66 (RIVLLK), 76–77 (YT), Arg82, Lys83, and Gln105. Residues Tyr123 and Arg127 each contribute to the substrate site. FMN-binding positions include 140 to 141 (QS) and Trp186. Position 192–194 (192–194 (RLH)) interacts with substrate. Arg196 lines the FMN pocket.

The protein belongs to the pyridoxamine 5'-phosphate oxidase family. Homodimer. Requires FMN as cofactor.

The enzyme catalyses pyridoxamine 5'-phosphate + O2 + H2O = pyridoxal 5'-phosphate + H2O2 + NH4(+). It carries out the reaction pyridoxine 5'-phosphate + O2 = pyridoxal 5'-phosphate + H2O2. It participates in cofactor metabolism; pyridoxal 5'-phosphate salvage; pyridoxal 5'-phosphate from pyridoxamine 5'-phosphate: step 1/1. Its pathway is cofactor metabolism; pyridoxal 5'-phosphate salvage; pyridoxal 5'-phosphate from pyridoxine 5'-phosphate: step 1/1. Catalyzes the oxidation of either pyridoxine 5'-phosphate (PNP) or pyridoxamine 5'-phosphate (PMP) into pyridoxal 5'-phosphate (PLP). In Salinibacter ruber (strain DSM 13855 / M31), this protein is Pyridoxine/pyridoxamine 5'-phosphate oxidase.